We begin with the raw amino-acid sequence, 204 residues long: MVRVKIIRHSERLDYTNPLYWLICFGHYWADSPLTKHGYEIAKKKGKELAESGFNPKYIYTSPYSRTMATATEIKTVFPNSHLVIEYLLAEYQPYFKHKINLYPDGIPTEFNGQETEFNYPETKSKFRERVEFIITKLIENNDEDIVIVTHGELLKVYIDYIQSIYPDLLLDSKVTPYLTTLSFEFDKKRDMIIEESVNIDFSN.

His-9 serves as the catalytic Tele-phosphohistidine intermediate. Catalysis depends on Glu-86, which acts as the Proton donor/acceptor.

It belongs to the phosphoglycerate mutase family.

This is an uncharacterized protein from Acanthamoeba polyphaga (Amoeba).